A 617-amino-acid chain; its full sequence is Proline--tRNA ligase (617 aa).

Belongs to the class-II aminoacyl-tRNA synthetase family. ProS type 1 subfamily. Homodimer.

It localises to the cytoplasm. The catalysed reaction is tRNA(Pro) + L-proline + ATP = L-prolyl-tRNA(Pro) + AMP + diphosphate. Its function is as follows. Catalyzes the attachment of proline to tRNA(Pro) in a two-step reaction: proline is first activated by ATP to form Pro-AMP and then transferred to the acceptor end of tRNA(Pro). As ProRS can inadvertently accommodate and process non-cognate amino acids such as alanine and cysteine, to avoid such errors it has two additional distinct editing activities against alanine. One activity is designated as 'pretransfer' editing and involves the tRNA(Pro)-independent hydrolysis of activated Ala-AMP. The other activity is designated 'posttransfer' editing and involves deacylation of mischarged Ala-tRNA(Pro). The misacylated Cys-tRNA(Pro) is not edited by ProRS. The protein is Proline--tRNA ligase of Treponema pallidum (strain Nichols).